The chain runs to 202 residues: Histone chaperone ASF1B (202 aa).

An interaction with CHAF1B region spans residues 1–155 (MAKVSVLNVA…VTRFHINWDN (155 aa)). An interaction with histone H3 region spans residues 1 to 156 (MAKVSVLNVA…TRFHINWDNN (156 aa)). A Phosphoserine; by TLK2 modification is found at Ser-198.

The protein belongs to the ASF1 family. Interacts with histone H3 (via C-terminus), including histone H3.1, H3.2 and H3.3, and histone H4; the interaction with H3 is direct. Interacts with the CHAF1A, CHAF1B and RBBP4 subunits of the CAF-1 complex. Interacts with HAT1, NASP and TAF1. Found in a soluble complex with NASP and histones H3 and H4; the interaction with NASP is probably indirect and mediated by H3-H4. Interacts with CDAN1. Found in a cytosolic complex with IPO4 and histones H3 and H4. Interacts with CREBBP. Phosphorylated by TLK1 and TLK2. In terms of tissue distribution, highly expressed in testis and at lower levels in colon, small intestine and thymus.

The protein resides in the nucleus. The protein localises to the cytoplasm. It is found in the cytosol. Functionally, histone chaperone that facilitates histone deposition and histone exchange and removal during nucleosome assembly and disassembly. Cooperates with chromatin assembly factor 1 (CAF-1) to promote replication-dependent chromatin assembly. Also involved in the nuclear import of the histone H3-H4 dimer together with importin-4 (IPO4): specifically recognizes and binds newly synthesized histones with the monomethylation of H3 'Lys-9' (H3K9me1) and diacetylation at 'Lys-5' and 'Lys-12' of H4 (H4K5K12ac) marks in the cytosol. Does not participate in replication-independent nucleosome deposition which is mediated by ASF1A and HIRA. Required for gonad development. The polypeptide is Histone chaperone ASF1B (Homo sapiens (Human)).